The chain runs to 1119 residues: Nuclear matrix constituent protein 1 (1119 aa).

Coiled-coil stretches lie at residues 140 to 226 (LAEL…LYQQ) and 328 to 488 (LQNR…LDER). Disordered regions lie at residues 846–884 (LDVE…AEEA), 903–974 (LASA…PTGR), 989–1015 (NGAL…EIPD), and 1046–1109 (GINA…EVSM). 2 stretches are compositionally biased toward basic residues: residues 859–876 (GNRK…RKRS) and 920–929 (KRTRNSRKRN). Polar residues predominate over residues 1075–1085 (TPEQSRGYQNQ).

This sequence belongs to the CRWN family.

It localises to the nucleus matrix. The protein localises to the nucleus lamina. In terms of biological role, architectural component of nuclear structure that plays different roles in controlling nuclear size and morphology. This chain is Nuclear matrix constituent protein 1, found in Daucus carota subsp. sativus (Carrot).